The primary structure comprises 338 residues: Tetraacyldisaccharide 4'-kinase (338 aa).

51 to 58 is an ATP binding site; it reads HLGGAGKT.

Belongs to the LpxK family.

It carries out the reaction a lipid A disaccharide + ATP = a lipid IVA + ADP + H(+). Its pathway is glycolipid biosynthesis; lipid IV(A) biosynthesis; lipid IV(A) from (3R)-3-hydroxytetradecanoyl-[acyl-carrier-protein] and UDP-N-acetyl-alpha-D-glucosamine: step 6/6. Its function is as follows. Transfers the gamma-phosphate of ATP to the 4'-position of a tetraacyldisaccharide 1-phosphate intermediate (termed DS-1-P) to form tetraacyldisaccharide 1,4'-bis-phosphate (lipid IVA). The sequence is that of Tetraacyldisaccharide 4'-kinase from Rhodopseudomonas palustris (strain HaA2).